The sequence spans 546 residues: Nuclear pore complex protein Nup58 (546 aa).

17 repeat units span residues 22–23 (FG), 36–37 (FG), 45–46 (FG), 64–65 (FG), 73–74 (FG), 82–83 (FG), 92–93 (FG), 101–102 (FG), 110–111 (FG), 119–120 (FG), 128–129 (FG), 137–138 (FG), 146–147 (FG), 155–156 (FG), 166–167 (FG), 197–198 (FG), and 199–200 (FG). The 17 X 2 AA repeats of F-G stretch occupies residues 22-200 (FGARPATTTA…TTAPPAFGFG (179 aa)).

It belongs to the NUP58 family. In terms of assembly, component of the nuclear pore complex. Interacts with Nup54. Interacts (via C-terminus) with fs(1)Yb; this interaction occurs in a RNA-independent manner. Interacts with sbr/nxf1. Interacts with Nxt1. O-glycosylated; contains O-GlcNAc. O-GlcNAcylation increases with increasing ambient temperature.

Its subcellular location is the nucleus. The protein localises to the nuclear pore complex. Its function is as follows. Component of the nuclear pore complex, a complex required for the trafficking across the nuclear membrane. Together with Nup54, required for transposable element silencing regulation in ovarian follicle cells. By interacting with the nuclear (Nxf1/Nxt1) and cytosolic (fs(1)Yb) components of the flamenco (flam) transcripts processing pathway, enables export and subsequent piRNA production. This Drosophila melanogaster (Fruit fly) protein is Nuclear pore complex protein Nup58.